Reading from the N-terminus, the 827-residue chain is Leucine--tRNA ligase (827 aa).

The short motif at 42 to 52 (PYPSGKLHMGH) is the 'HIGH' region element. A 'KMSKS' region motif is present at residues 583–587 (KMSKS). Residue Lys586 participates in ATP binding.

Belongs to the class-I aminoacyl-tRNA synthetase family.

It localises to the cytoplasm. The catalysed reaction is tRNA(Leu) + L-leucine + ATP = L-leucyl-tRNA(Leu) + AMP + diphosphate. This is Leucine--tRNA ligase from Pelotomaculum thermopropionicum (strain DSM 13744 / JCM 10971 / SI).